We begin with the raw amino-acid sequence, 82 residues long: Large ribosomal subunit protein bL28 (82 aa).

A disordered region spans residues Met1–Ser25.

It belongs to the bacterial ribosomal protein bL28 family.

In Malacoplasma penetrans (strain HF-2) (Mycoplasma penetrans), this protein is Large ribosomal subunit protein bL28.